A 500-amino-acid chain; its full sequence is Arabinofuranosidase/B-xylosidase (500 aa).

A signal peptide spans 1-21 (MLSNARIIAAGCIAAGSLVAA). N-linked (GlcNAc...) asparagine glycosylation occurs at Asn-467.

It belongs to the glycosyl hydrolase 54 family.

The catalysed reaction is Hydrolysis of terminal non-reducing alpha-L-arabinofuranoside residues in alpha-L-arabinosides.. It catalyses the reaction Hydrolysis of (1-&gt;4)-beta-D-xylans, to remove successive D-xylose residues from the non-reducing termini.. The protein is Arabinofuranosidase/B-xylosidase (xyl1) of Trichoderma koningii (Hypocrea koningii).